A 258-amino-acid chain; its full sequence is D-aminoacyl-tRNA deacylase (258 aa).

It belongs to the DtdA deacylase family. In terms of assembly, monomer. The cofactor is Zn(2+).

The enzyme catalyses a D-aminoacyl-tRNA + H2O = a tRNA + a D-alpha-amino acid + H(+). It catalyses the reaction glycyl-tRNA(Ala) + H2O = tRNA(Ala) + glycine + H(+). Functionally, D-aminoacyl-tRNA deacylase with broad substrate specificity. By recycling D-aminoacyl-tRNA to D-amino acids and free tRNA molecules, this enzyme counteracts the toxicity associated with the formation of D-aminoacyl-tRNA entities in vivo. In Cenarchaeum symbiosum (strain A), this protein is D-aminoacyl-tRNA deacylase.